A 194-amino-acid polypeptide reads, in one-letter code: 22 kDa relaxation protein (194 aa).

Its function is as follows. This protein is probably required for relaxation complex formation. The chain is 22 kDa relaxation protein from Salmonella typhimurium.